The sequence spans 260 residues: Ribonuclease HII (260 aa).

In terms of domain architecture, RNase H type-2 spans 70–260 (QAIAGIDEVG…PIKSMLKEKN (191 aa)). Positions 76, 77, and 171 each coordinate a divalent metal cation.

Belongs to the RNase HII family. It depends on Mn(2+) as a cofactor. Requires Mg(2+) as cofactor.

Its subcellular location is the cytoplasm. It catalyses the reaction Endonucleolytic cleavage to 5'-phosphomonoester.. Its function is as follows. Endonuclease that specifically degrades the RNA of RNA-DNA hybrids. This is Ribonuclease HII from Streptococcus mutans serotype c (strain ATCC 700610 / UA159).